We begin with the raw amino-acid sequence, 677 residues long: UvrABC system protein B (677 aa).

Positions 27-192 constitute a Helicase ATP-binding domain; the sequence is ANLGQGVRDQ…QRNDFDFHRG (166 aa). Residue 40–47 participates in ATP binding; it reads GVTGSGKT. The Beta-hairpin signature appears at 93–116; the sequence is YYDYYQPEAYVPASDTYIEKDSSI. Residues 432–594 enclose the Helicase C-terminal domain; it reads QVDDLLAECR…IEPRTIRKSL (163 aa). The region spanning 638-673 is the UVR domain; it reads AKHIQKLEREMREAAKELEFERAATLRDRIRLLRER.

The protein belongs to the UvrB family. In terms of assembly, forms a heterotetramer with UvrA during the search for lesions. Interacts with UvrC in an incision complex.

It localises to the cytoplasm. Its function is as follows. The UvrABC repair system catalyzes the recognition and processing of DNA lesions. A damage recognition complex composed of 2 UvrA and 2 UvrB subunits scans DNA for abnormalities. Upon binding of the UvrA(2)B(2) complex to a putative damaged site, the DNA wraps around one UvrB monomer. DNA wrap is dependent on ATP binding by UvrB and probably causes local melting of the DNA helix, facilitating insertion of UvrB beta-hairpin between the DNA strands. Then UvrB probes one DNA strand for the presence of a lesion. If a lesion is found the UvrA subunits dissociate and the UvrB-DNA preincision complex is formed. This complex is subsequently bound by UvrC and the second UvrB is released. If no lesion is found, the DNA wraps around the other UvrB subunit that will check the other stand for damage. The sequence is that of UvrABC system protein B from Nitratidesulfovibrio vulgaris (strain DP4) (Desulfovibrio vulgaris).